A 387-amino-acid polypeptide reads, in one-letter code: Phosphoglycerate kinase (387 aa).

Substrate-binding positions include 21–23 (DLN), R36, 59–62 (HLGR), R113, and R146. Residues K197, E314, and 340–343 (GGDT) contribute to the ATP site.

It belongs to the phosphoglycerate kinase family. Monomer.

The protein localises to the cytoplasm. The enzyme catalyses (2R)-3-phosphoglycerate + ATP = (2R)-3-phospho-glyceroyl phosphate + ADP. Its pathway is carbohydrate degradation; glycolysis; pyruvate from D-glyceraldehyde 3-phosphate: step 2/5. The protein is Phosphoglycerate kinase of Aliivibrio fischeri (strain ATCC 700601 / ES114) (Vibrio fischeri).